A 703-amino-acid chain; its full sequence is ABC transporter G family member 11 (703 aa).

An ABC transporter domain is found at 50–293 (LTWQDLTVMV…FAQAGFPCPA (244 aa)). 87–94 (GPSGSGKS) lines the ATP pocket. One can recognise an ABC transmembrane type-2 domain in the interval 382 to 594 (LQTYTLTKRS…ALQGQYQNDL (213 aa)). N394 carries an N-linked (GlcNAc...) asparagine glycan. A run of 6 helical transmembrane segments spans residues 406 to 426 (LLIYILVTVCIGTIYLNVGTS), 436 to 456 (CASFVFGFVTFMSIGGFPSFV), 485 to 505 (TPFLIMITFISGTICYFMVGL), 513 to 533 (LFFVLCLYASVTVVESLMMAI), 540 to 560 (FLMGIIIGAGIQGIFMLVSGF), and 628 to 648 (INLSVILSMIIIYRIIFFIMI). Residues N671 and N675 are each glycosylated (N-linked (GlcNAc...) asparagine). S688 carries the phosphoserine modification.

It belongs to the ABC transporter superfamily. ABCG family. Eye pigment precursor importer (TC 3.A.1.204) subfamily. In terms of assembly, homodimer. Forms heterodimers with ABCG9, ABCG12 and ABCG14 in epidermal cells. As to expression, expressed in seedlings, roots, stems, leaves, flowers, and siliques, mostly in epidermis, trichomes, vasculatures and developing tissues. Follows an uniparental maternal expression in the seed, thus being the product of a maternally expressed imprinted gene. Accumulates in the phloem. Transcripts seem to be transported from shoots to roots.

It is found in the cell membrane. Functionally, required for the cuticle, root suberin and pollen coat development by controlling cutin and maybe wax transport to the extracellular matrix. Involved in developmental plasticity and stress responses. Together with ABCG9 and ABCG14, required for vascular development by regulating lipid/sterol homeostasis. May be a transporter of lignin precursors during tracheary element differentiation. The polypeptide is ABC transporter G family member 11 (Arabidopsis thaliana (Mouse-ear cress)).